The following is a 545-amino-acid chain: Chaperonin GroEL (545 aa).

Residues 29–32 (TLGP), K50, 86–90 (DGTTT), G413, and D495 each bind ATP.

It belongs to the chaperonin (HSP60) family. In terms of assembly, forms a cylinder of 14 subunits composed of two heptameric rings stacked back-to-back. Interacts with the co-chaperonin GroES.

It is found in the cytoplasm. The catalysed reaction is ATP + H2O + a folded polypeptide = ADP + phosphate + an unfolded polypeptide.. In terms of biological role, together with its co-chaperonin GroES, plays an essential role in assisting protein folding. The GroEL-GroES system forms a nano-cage that allows encapsulation of the non-native substrate proteins and provides a physical environment optimized to promote and accelerate protein folding. This chain is Chaperonin GroEL, found in Borreliella burgdorferi (strain ATCC 35210 / DSM 4680 / CIP 102532 / B31) (Borrelia burgdorferi).